Here is a 402-residue protein sequence, read N- to C-terminus: Tyrosine--tRNA ligase (402 aa).

A 'HIGH' region motif is present at residues 48 to 57 (PTGSDIHLGH). The short motif at 235–239 (KMSKS) is the 'KMSKS' region element. ATP is bound at residue Lys238. An S4 RNA-binding domain is found at 338–402 (AKAFYLVSAV…GKKKFVRLVL (65 aa)).

It belongs to the class-I aminoacyl-tRNA synthetase family. TyrS type 2 subfamily. In terms of assembly, homodimer.

The protein localises to the cytoplasm. It carries out the reaction tRNA(Tyr) + L-tyrosine + ATP = L-tyrosyl-tRNA(Tyr) + AMP + diphosphate + H(+). Functionally, catalyzes the attachment of tyrosine to tRNA(Tyr) in a two-step reaction: tyrosine is first activated by ATP to form Tyr-AMP and then transferred to the acceptor end of tRNA(Tyr). The chain is Tyrosine--tRNA ligase from Synechococcus elongatus (strain ATCC 33912 / PCC 7942 / FACHB-805) (Anacystis nidulans R2).